Reading from the N-terminus, the 434-residue chain is Progestin and adipoQ receptor-like protein 1 (434 aa).

The Cytoplasmic segment spans residues 1–201; sequence MNPDEVNRAL…KSIWSLHTET (201 aa). Disordered stretches follow at residues 74 to 103 and 118 to 137; these read LPQQ…MPKH and EINL…ELEV. Residues 202–222 form a helical membrane-spanning segment; that stretch reads GNIWTHLIGCVAFFFLACWFL. Topologically, residues 223 to 234 are extracellular; the sequence is TRPDNHIQFQEK. The helical transmembrane segment at 235–255 threads the bilayer; it reads VVFSFFFAGAVLCLGLSFAFH. Residues 256-273 lie on the Cytoplasmic side of the membrane; it reads TLSCHSVNVVKIFCKLDY. The helical transmembrane segment at 274–294 threads the bilayer; sequence MGISLLIIGSFIPWIYYGFYC. Topologically, residues 295–299 are extracellular; that stretch reads RREPK. A helical membrane pass occupies residues 300–320; the sequence is ITYIAMVSVLGIGAIVVSLWD. The Cytoplasmic portion of the chain corresponds to 321-331; that stretch reads KFSESRFRPIR. A helical membrane pass occupies residues 332–352; sequence AAVFVGMGCSGVIPTIHYIIT. Residues 353–362 are Extracellular-facing; sequence DGVHSLFADN. The chain crosses the membrane as a helical span at residues 363–383; the sequence is SFHWLLLMAFLYLLGAGLYAT. Topologically, residues 384–403 are cytoplasmic; it reads RTPERFFPGKCDIWFQSHQL. Residues 404–424 traverse the membrane as a helical segment; it reads FHTCVVIAAFVHYYGISEMAF. The Extracellular segment spans residues 425 to 434; the sequence is ARLNEQCPVR.

It belongs to the ADIPOR family.

The protein localises to the membrane. Probable receptor, which may be involved in metabolic pathways that regulate lipid metabolism such as fatty acid oxidation. This is Progestin and adipoQ receptor-like protein 1 (paqr-1) from Caenorhabditis elegans.